We begin with the raw amino-acid sequence, 350 residues long: MNKITVLCVDDSALMRQIMREIINSHSDMEVVACAPDPLVARDLIKKHNPQVLTLDVEMPRMDGIDFLEKLMRLRPMPVVMISSLTAKGSEITLRALELGAVDFITKPQLGIREGMLAYSELIAEKIRTAAQAKLSVPIITPVSSAPLSFKPLLSSEKLIAVGASTGGTEAIKNLLQPLPVTSPALLITQHMPPGFTRSFAERLNKLSQITVKEAENGERILPGHAYIAPGDRHMELCRNGADYQVLITDAPAVNRHRPSVDVLFRSVAKFAGKNAVGVLLTGMGSDGAAGLLEMKQAGAYTLAQDEASCVVFGMPRAAIQMGAVDEVMDILKMSKRMLAKISSGQAVRI.

The Response regulatory domain maps to 5-122 (TVLCVDDSAL…REGMLAYSEL (118 aa)). Residue aspartate 56 is modified to 4-aspartylphosphate. The 193-residue stretch at 153–345 (LLSSEKLIAV…KRMLAKISSG (193 aa)) folds into the CheB-type methylesterase domain. Active-site residues include serine 165, histidine 191, and aspartate 287.

This sequence belongs to the CheB family. Phosphorylated by CheA. Phosphorylation of the N-terminal regulatory domain activates the methylesterase activity.

The protein localises to the cytoplasm. The enzyme catalyses [protein]-L-glutamate 5-O-methyl ester + H2O = L-glutamyl-[protein] + methanol + H(+). It catalyses the reaction L-glutaminyl-[protein] + H2O = L-glutamyl-[protein] + NH4(+). Involved in chemotaxis. Part of a chemotaxis signal transduction system that modulates chemotaxis in response to various stimuli. Catalyzes the demethylation of specific methylglutamate residues introduced into the chemoreceptors (methyl-accepting chemotaxis proteins or MCP) by CheR. Also mediates the irreversible deamidation of specific glutamine residues to glutamic acid. In Photorhabdus laumondii subsp. laumondii (strain DSM 15139 / CIP 105565 / TT01) (Photorhabdus luminescens subsp. laumondii), this protein is Protein-glutamate methylesterase/protein-glutamine glutaminase.